Consider the following 475-residue polypeptide: ATP synthase subunit beta (475 aa).

155–162 lines the ATP pocket; that stretch reads GGAGVGKT.

This sequence belongs to the ATPase alpha/beta chains family. F-type ATPases have 2 components, CF(1) - the catalytic core - and CF(0) - the membrane proton channel. CF(1) has five subunits: alpha(3), beta(3), gamma(1), delta(1), epsilon(1). CF(0) has three main subunits: a(1), b(2) and c(9-12). The alpha and beta chains form an alternating ring which encloses part of the gamma chain. CF(1) is attached to CF(0) by a central stalk formed by the gamma and epsilon chains, while a peripheral stalk is formed by the delta and b chains.

It is found in the cell inner membrane. It carries out the reaction ATP + H2O + 4 H(+)(in) = ADP + phosphate + 5 H(+)(out). Produces ATP from ADP in the presence of a proton gradient across the membrane. The catalytic sites are hosted primarily by the beta subunits. The sequence is that of ATP synthase subunit beta from Rhizobium etli (strain ATCC 51251 / DSM 11541 / JCM 21823 / NBRC 15573 / CFN 42).